The sequence spans 223 residues: UPF0502 protein Shew185_1758 (223 aa).

The protein belongs to the UPF0502 family.

In Shewanella baltica (strain OS185), this protein is UPF0502 protein Shew185_1758.